Reading from the N-terminus, the 264-residue chain is Thymidylate synthase (264 aa).

A dUMP-binding site is contributed by Arg21. His51 contacts (6R)-5,10-methylene-5,6,7,8-tetrahydrofolate. DUMP is bound at residue 126–127 (RR). The active-site Nucleophile is Cys146. Residues 166 to 169 (RSAD), Asn177, and 207 to 209 (HLY) each bind dUMP. Residue Asp169 coordinates (6R)-5,10-methylene-5,6,7,8-tetrahydrofolate. Ala263 provides a ligand contact to (6R)-5,10-methylene-5,6,7,8-tetrahydrofolate.

The protein belongs to the thymidylate synthase family. Bacterial-type ThyA subfamily. In terms of assembly, homodimer.

Its subcellular location is the cytoplasm. The enzyme catalyses dUMP + (6R)-5,10-methylene-5,6,7,8-tetrahydrofolate = 7,8-dihydrofolate + dTMP. The protein operates within pyrimidine metabolism; dTTP biosynthesis. Catalyzes the reductive methylation of 2'-deoxyuridine-5'-monophosphate (dUMP) to 2'-deoxythymidine-5'-monophosphate (dTMP) while utilizing 5,10-methylenetetrahydrofolate (mTHF) as the methyl donor and reductant in the reaction, yielding dihydrofolate (DHF) as a by-product. This enzymatic reaction provides an intracellular de novo source of dTMP, an essential precursor for DNA biosynthesis. This is Thymidylate synthase from Paramagnetospirillum magneticum (strain ATCC 700264 / AMB-1) (Magnetospirillum magneticum).